The sequence spans 447 residues: Phosphoglucosamine mutase (447 aa).

Ser-104 acts as the Phosphoserine intermediate in catalysis. Residues Ser-104, Asp-243, Asp-245, and Asp-247 each contribute to the Mg(2+) site. Ser-104 is modified (phosphoserine).

This sequence belongs to the phosphohexose mutase family. Mg(2+) is required as a cofactor. In terms of processing, activated by phosphorylation.

It catalyses the reaction alpha-D-glucosamine 1-phosphate = D-glucosamine 6-phosphate. Its function is as follows. Catalyzes the conversion of glucosamine-6-phosphate to glucosamine-1-phosphate. The sequence is that of Phosphoglucosamine mutase from Corynebacterium glutamicum (strain R).